Reading from the N-terminus, the 829-residue chain is Transmembrane protease serine 7 (829 aa).

Residues 1–62 (MDKEKSDPSC…RAPFWNVQNK (62 aa)) lie on the Cytoplasmic side of the membrane. Positions 26 to 52 (SVPGKLPGRRPPRKPIGKPRPRKQPKK) are disordered. The segment covering 32-52 (PGRRPPRKPIGKPRPRKQPKK) has biased composition (basic residues). Residues 63–83 (IILFTVFLFILAVTAWTLLWL) form a helical; Signal-anchor for type II membrane protein membrane-spanning segment. The Extracellular portion of the chain corresponds to 84–829 (YISKTESKDA…WIHKYVPSLL (746 aa)). Positions 92–220 (DAFYFVGMFR…DSVVLNAGLR (129 aa)) constitute an SEA domain. Disulfide bonds link cysteine 233–cysteine 259, cysteine 285–cysteine 308, and cysteine 351–cysteine 382. 2 consecutive CUB domains span residues 233-346 (CSRY…FEVI) and 351-467 (CEST…YNIS). N-linked (GlcNAc...) asparagine glycosylation is found at asparagine 401 and asparagine 465. LDL-receptor class A domains follow at residues 469 to 505 (PCPAGSFRCSSGLCVPQAQRCDGVNDCFDESDELFCV), 503 to 540 (FCVTVKPACNSSSFRQHGPLVCDGFRDCEDGQDEQNCT), and 544 to 581 (PCTSRTFKCGNDICFRKQNAQCDGIVDCPDGSDEEGCG). Cystine bridges form between cysteine 470–cysteine 482, cysteine 477–cysteine 495, cysteine 489–cysteine 504, cysteine 511–cysteine 530, cysteine 524–cysteine 539, cysteine 545–cysteine 557, cysteine 552–cysteine 571, cysteine 565–cysteine 580, and cysteine 617–cysteine 633. Residues 592–826 (IVGGSDSQEG…FVPWIHKYVP (235 aa)) form the Peptidase S1 domain. Active-site charge relay system residues include histidine 632 and aspartate 680. Intrachain disulfides connect cysteine 716-cysteine 782, cysteine 748-cysteine 761, and cysteine 772-cysteine 802. Residue serine 776 is the Charge relay system of the active site.

The protein belongs to the peptidase S1 family. Forms a heterodimer with SERPINA5. Post-translationally, N-glycosylated. Expressed in brain, eye, testis, skin, epididymis and salivary gland with lower levels in heart, skeletal muscle, thymus, ovary, prostate and uterus.

The protein resides in the cell membrane. Its function is as follows. Serine protease which preferentially hydrolyzes peptides with Arg at the P1 position. The chain is Transmembrane protease serine 7 (Tmprss7) from Mus musculus (Mouse).